A 1257-amino-acid chain; its full sequence is MASVCGTPSPGGALGSPAPAWYHRDLSRAAAEELLARAGRDGSFLVRDSESVAGAFALCVLYQKHVHTYRILPDGEDFLAVQTSQGVPVRRFQTLGELIGLYAQPNQGLVCALLLPVEGEREPDPPDDRDASDVEDEKPPLPPRSGSTSISAPVGPSSPLPTPETPTTPAAESTPNGLSTVSHEYLKGSYGLDLEAVRGGASNLPHLTRTLVTSCRRLHSEVDKVLSGLEILSKVFDQQSSPMVTRLLQQQSLPQTGEQELESLVLKLSVLKDFLSGIQKKALKALQDMSSTAPPAPLQPSIRKAKTIPVQAFEVKLDVTLGDLTKIGKSQKFTLSVDVEGGRLVLLRRQRDSQEDWTTFTHDRIRQLIKSQRVQNKLGVVFEKEKDRTQRKDFIFVSARKREAFCQLLQLMKNRHSKQDEPDMISVFIGTWNMGSVPPPKNVTSWFTSKGLGKALDEVTVTIPHDIYVFGTQENSVGDREWLDLLRGGLKELTDLDYRPIAMQSLWNIKVAVLVKPEHENRISHVSTSSVKTGIANTLGNKGAVGVSFMFNGTSFGFVNCHLTSGNEKTTRRNQNYLDILRLLSLGDRQLSAFDISLRFTHLFWFGDLNYRLDMDIQEILNYISRREFEPLLRVDQLNLEREKHKVFLRFSEEEISFPPTYRYERGSRDTYAWHKQKPTGVRTNVPSWCDRILWKSYPETHIICNSYGCTDDIVTSDHSPVFGTFEVGVTSQFISKKGLSKTSDQAYIEFESIEAIVKTASRTKFFIEFYSTCLEEYKKSFENDAQSSDNINFLKVQWSSRQLPTLKPILADIEYLQDQHLLLTVKSMDGYESYGECVVALKSMIGSTAQQFLTFLSHRGEETGNIRGSMKVRVPTERLGTRERLYEWISIDKDDTGAKSKVPSVSRGSQEHRSGSRKPASTETSCPLSKLFEEPEKPPPTGRPPAPPRAVPREEPLNPRLKSEGTSEQEGVAAPPPKNSFNNPAYYVLEGVPHQLLPLEPPSLARAPLPPATKNKVAITVPAPQLGRHRTPRVGEGSSSDEDSGGTLPPPDFPPPPLPDSAIFLPPNLDPLSMPVVRGRSGGEARGPPPPKAHPRPPLPPGTSPASTFLGEVASGDDRSCSVLQMAKTLSEVDYAPGPGRSALLPNPLELQPPRGPSDYGRPLSFPPPRIRESIQEDLAEEAPCPQGGRASGLGEAGMGAWLRAIGLERYEEGLVHNGWDDLEFLSDITEEDLEEAGVQDPAHKRLLLDTLQLSK.

The SH2 domain maps to 21–117; the sequence is WYHRDLSRAA…GLVCALLLPV (97 aa). A compositionally biased stretch (basic and acidic residues) spans 119–132; that stretch reads GEREPDPPDDRDAS. The segment at 119-181 is disordered; the sequence is GEREPDPPDD…ESTPNGLSTV (63 aa). The residue at position 132 (Ser-132) is a Phosphoserine. Pro residues predominate over residues 156–166; that stretch reads PSSPLPTPETP. Phosphothreonine is present on Thr-165. 2 positions are modified to phosphoserine: Ser-241 and Ser-353. Tyr-887 bears the Phosphotyrosine mark. Phosphoserine is present on Ser-891. The segment at 897 to 986 is disordered; the sequence is TGAKSKVPSV…PPKNSFNNPA (90 aa). The span at 939–951 shows a compositional bias: pro residues; sequence PPPTGRPPAPPRA. Residues 945-950 carry the SH3-binding motif; that stretch reads PPAPPR. The span at 952–966 shows a compositional bias: basic and acidic residues; the sequence is VPREEPLNPRLKSEG. The NPXY motif motif lies at 984-987; that stretch reads NPAY. Tyr-987 is modified (phosphotyrosine). Residues 999–1008 show a composition bias toward low complexity; it reads PLEPPSLARA. Residues 999–1119 are disordered; that stretch reads PLEPPSLARA…FLGEVASGDD (121 aa). Composition is skewed to pro residues over residues 1049 to 1060 and 1088 to 1104; these read LPPPDFPPPPLP and GPPP…PPGT. The residue at position 1132 (Ser-1132) is a Phosphoserine. The disordered stretch occupies residues 1134–1196; the sequence is VDYAPGPGRS…PQGGRASGLG (63 aa). Tyr-1136 and Tyr-1161 each carry phosphotyrosine. In terms of domain architecture, SAM spans 1195 to 1257; that stretch reads LGEAGMGAWL…LLLDTLQLSK (63 aa). Position 1256 is a phosphoserine (Ser-1256).

Belongs to the inositol 1,4,5-trisphosphate 5-phosphatase family. As to quaternary structure, interacts with tyrosine phosphorylated form of SHC1. Interacts with EGFR. Upon stimulation by the EGF signaling pathway, it forms a complex with SHC1 and EGFR. Interacts with cytoskeletal protein SORBS3/vinexin, promoting its localization to the periphery of cells. Forms a complex with filamin (FLNA or FLNB), actin, GPIb (GP1BA or GP1BB) that regulates cortical and submembraneous actin. Interacts with c-Met/MET, when c-Met/MET is phosphorylated on 'Tyr-1356'. Interacts with p130Cas/BCAR1. Interacts with CENTD3/ARAP3 via its SAM domain. Interacts with c-Cbl/CBL and CAP/SORBS1. Interacts with activated EPHA2 receptor. Interacts with receptors FCGR2A. Interacts with FCGR2B. Interacts with tyrosine kinase ABL1. Interacts with tyrosine kinase TEC. Interacts with CSF1R. Interacts (via N-terminus) with SH3YL1 (via SH3 domain). Interacts (via SH2 domain) with tyrosine phosphorylated KLRC1 (via ITIM). Interacts with NEDD9/HEF1. Tyrosine phosphorylated by the members of the SRC family after exposure to a diverse array of extracellular stimuli such as insulin, growth factors such as EGF or PDGF, chemokines, integrin ligands and hypertonic and oxidative stress. May be phosphorylated upon IgG receptor FCGR2B-binding. Phosphorylated at Tyr-987 following cell attachment and spreading. Phosphorylated at Tyr-1161 following EGF signaling pathway stimulation. In terms of tissue distribution, widely expressed.

It localises to the cytoplasm. The protein localises to the cytosol. Its subcellular location is the cytoskeleton. It is found in the membrane. The protein resides in the cell projection. It localises to the filopodium. The protein localises to the lamellipodium. Its subcellular location is the basal cell membrane. It is found in the nucleus. The protein resides in the nucleus speckle. It localises to the spindle pole. It carries out the reaction a 1,2-diacyl-sn-glycero-3-phospho-(1D-myo-inositol-3,4,5-trisphosphate) + H2O = a 1,2-diacyl-sn-glycero-3-phospho-(1D-myo-inositol-3,4-bisphosphate) + phosphate. The enzyme catalyses 1,2-dioctanoyl-sn-glycero-3-phospho-(1D-myo-inositol-3,4,5-trisphosphate) + H2O = 1,2-dioctanoyl-sn-glycero-3-phospho-(1D-myo-inositol-3,4-bisphosphate) + phosphate. The catalysed reaction is 1,2-dihexadecanoyl-sn-glycero-3-phospho-(1D-myo-inositol-3,4,5-trisphosphate) + H2O = 1,2-dihexadecanoyl-sn-glycero-3-phospho-(1D-myo-inositol-3,4-bisphosphate) + phosphate. Its activity is regulated as follows. Activated upon translocation to the sites of synthesis of PtdIns(3,4,5)P3 in the membrane. Enzymatic activity is enhanced in the presence of phosphatidylserine. Phosphatidylinositol (PtdIns) phosphatase that specifically hydrolyzes the 5-phosphate of phosphatidylinositol-3,4,5-trisphosphate (PtdIns(3,4,5)P3) to produce PtdIns(3,4)P2, thereby negatively regulating the PI3K (phosphoinositide 3-kinase) pathways. Required for correct mitotic spindle orientation and therefore progression of mitosis. Plays a central role in regulation of PI3K-dependent insulin signaling, although the precise molecular mechanisms and signaling pathways remain unclear. While overexpression reduces both insulin-stimulated MAP kinase and Akt activation, its absence does not affect insulin signaling or GLUT4 trafficking. Confers resistance to dietary obesity. May act by regulating AKT2, but not AKT1, phosphorylation at the plasma membrane. Part of a signaling pathway that regulates actin cytoskeleton remodeling. Required for the maintenance and dynamic remodeling of actin structures as well as in endocytosis, having a major impact on ligand-induced EGFR internalization and degradation. Participates in regulation of cortical and submembraneous actin by hydrolyzing PtdIns(3,4,5)P3 thereby regulating membrane ruffling. Regulates cell adhesion and cell spreading. Required for HGF-mediated lamellipodium formation, cell scattering and spreading. Acts as a negative regulator of EPHA2 receptor endocytosis by inhibiting via PI3K-dependent Rac1 activation. Acts as a regulator of neuritogenesis by regulating PtdIns(3,4,5)P3 level and is required to form an initial protrusive pattern, and later, maintain proper neurite outgrowth. Acts as a negative regulator of the FC-gamma-RIIA receptor (FCGR2A). Mediates signaling from the FC-gamma-RIIB receptor (FCGR2B), playing a central role in terminating signal transduction from activating immune/hematopoietic cell receptor systems. Upon stimulation by EGF, it is recruited by EGFR and dephosphorylates PtdIns(3,4,5)P3. Plays a negative role in regulating the PI3K-PKB pathway, possibly by inhibiting PKB activity. Down-regulates Fc-gamma-R-mediated phagocytosis in macrophages independently of INPP5D/SHIP1. In macrophages, down-regulates NF-kappa-B-dependent gene transcription by regulating macrophage colony-stimulating factor (M-CSF)-induced signaling. Plays a role in the localization of AURKA and NEDD9/HEF1 to the basolateral membrane at interphase in polarized cysts, thereby mediates cell cycle homeostasis, cell polarization and cilia assembly. Additionally promotion of cilia growth is also facilitated by hydrolysis of (PtdIns(3,4,5)P3) to PtdIns(3,4)P2. Promotes formation of apical membrane-initiation sites during the initial stages of lumen formation via Rho family-induced actin filament organization and CTNNB1 localization to cell-cell contacts. May also hydrolyze PtdIns(1,3,4,5)P4, and could thus affect the levels of the higher inositol polyphosphates like InsP6. Involved in endochondral ossification. The protein is Phosphatidylinositol 3,4,5-trisphosphate 5-phosphatase 2 of Mus musculus (Mouse).